The following is a 300-amino-acid chain: SNAP25 homologous protein SNAP33 (300 aa).

Disordered regions lie at residues 1–76 (MFGL…QSLF) and 176–228 (WKPK…PESA). The residue at position 29 (S29) is a Phosphoserine. Residues 38-49 (TLNPSKRTTSEP) are compositionally biased toward polar residues. Basic and acidic residues predominate over residues 190 to 208 (TRDDSPTRRVNHLEKREKL). A t-SNARE coiled-coil homology domain is found at 235–297 (EMEKAKQDDG…QQSNQRGRRL (63 aa)).

Belongs to the SNAP-25 family. As to quaternary structure, interacts with the cytokinesis-specific syntaxin KNOLLE and with SYP121. Binds to EXO70B2. Ubiquitous, with a strong expression in root tips, ovules, very young leaves, vascular tissue, hydathodes, stipules and the abscission and dehiscence zones of the siliques.

The protein localises to the membrane. In terms of biological role, t-SNARE involved in diverse vesicle trafficking and membrane fusion processes, including cell plate formation. May function in the secretory pathway. In Arabidopsis thaliana (Mouse-ear cress), this protein is SNAP25 homologous protein SNAP33.